The chain runs to 246 residues: Uridylate kinase (246 aa).

ATP is bound at residue 11 to 14; that stretch reads KISG. Residue Gly53 coordinates UMP. Residues Gly54 and Arg58 each coordinate ATP. Residues Asp74 and 135 to 142 each bind UMP; that span reads TGSPYLTT. Residues Thr162, Tyr169, and Asp172 each coordinate ATP.

This sequence belongs to the UMP kinase family. In terms of assembly, homohexamer.

The protein resides in the cytoplasm. The catalysed reaction is UMP + ATP = UDP + ADP. Its pathway is pyrimidine metabolism; CTP biosynthesis via de novo pathway; UDP from UMP (UMPK route): step 1/1. With respect to regulation, inhibited by UTP. In terms of biological role, catalyzes the reversible phosphorylation of UMP to UDP. This chain is Uridylate kinase, found in Chlamydia abortus (strain DSM 27085 / S26/3) (Chlamydophila abortus).